A 362-amino-acid chain; its full sequence is Erythritol/L-threitol dehydrogenase (362 aa).

Residues C45, H76, E77, C109, C112, C115, and C123 each coordinate Zn(2+). Positions 195 and 215 each coordinate NAD(+).

The protein belongs to the zinc-containing alcohol dehydrogenase family. Zn(2+) serves as cofactor.

The catalysed reaction is erythritol + NAD(+) = D-erythrulose + NADH + H(+). It carries out the reaction L-threitol + NAD(+) = L-erythrulose + NADH + H(+). Its pathway is carbohydrate metabolism; erythritol degradation. It functions in the pathway carbohydrate metabolism; L-threitol degradation. Functionally, catalyzes the NAD-dependent reversible oxidation of erythritol and L-threitol. Involved in the degradation pathways of erythritol and L-threitol, that allow M.smegmatis to grow on these compounds as the sole carbon source. In Mycolicibacterium smegmatis (strain ATCC 700084 / mc(2)155) (Mycobacterium smegmatis), this protein is Erythritol/L-threitol dehydrogenase.